The sequence spans 208 residues: MKGLFVTIEGPEGSGKTTLIQGLLPYFEQKEQKVMATREPGGIAISEDIRTILHKQEYTMMEARTEALLYAAARRQHLVEKVMPALDEDYLVLCDRFIDSSLAYQGYARGLGMDKVFEINRFATEDCMPSLTIYLDIEPEVGLARIAKDAGREVNRLDMEDITFHKRVREGYLQVVERFSDRIVLVNADQPMEKLIEEVIQVIEDKLL.

Position 10–17 (10–17 (GPEGSGKT)) interacts with ATP.

Belongs to the thymidylate kinase family.

It catalyses the reaction dTMP + ATP = dTDP + ADP. Phosphorylation of dTMP to form dTDP in both de novo and salvage pathways of dTTP synthesis. The chain is Thymidylate kinase from Bacillus cereus (strain ATCC 10987 / NRS 248).